Consider the following 1037-residue polypeptide: Multidrug resistance protein MdtF (1037 aa).

Residues 1–9 (MANYFIDRP) lie on the Cytoplasmic side of the membrane. Residues 10 to 30 (VFAWVLAIIMMLAGGLAIMNL) traverse the membrane as a helical segment. Topologically, residues 31–338 (PVAQYPQIAP…TTPFIEISIQ (308 aa)) are periplasmic. Residues 339 to 359 (EVFKTLVEAIILVFLVMYLFL) traverse the membrane as a helical segment. The Cytoplasmic portion of the chain corresponds to 360–369 (QNFRATIIPT). The chain crosses the membrane as a helical span at residues 370–390 (IAVPVVILGTFAILSAVGFTI). Residues 391 to 392 (NT) are Periplasmic-facing. A helical membrane pass occupies residues 393 to 413 (LTMFGMVLAIGLLVDDAIVVV). Topologically, residues 414–441 (ENVERVIAEDKLPPKEATHKSMGQIQRA) are cytoplasmic. Residues 442-462 (LVGIAVVLSAVFMPMAFMSGA) form a helical membrane-spanning segment. At 463–471 (TGEIYRQFS) the chain is on the periplasmic side. A helical membrane pass occupies residues 472–492 (ITLISSMLLSVFVAMSLTPAL). The Cytoplasmic segment spans residues 493–534 (CATILKAAPEGGHKPNALFARFNTLFEKSTQHYTDSTRSLLR). Residues 535–555 (CTGRYMVIYLLICAGMAVLFL) form a helical membrane-spanning segment. Residues 556–870 (RTPTSFLPEE…SYQEALSSNQ (315 aa)) lie on the Periplasmic side of the membrane. The chain crosses the membrane as a helical span at residues 871–891 (APALYAISLVVVFLALAALYE). Position 892 (Ser892) is a topological domain, cytoplasmic. Residues 893–913 (WSIPFSVMLVVPLGVVGALLA) form a helical membrane-spanning segment. The Periplasmic portion of the chain corresponds to 914-927 (TDLRGLSNDVYFQV). Residues 928–948 (GLLTTIGLSAKNAILIVEFAV) form a helical membrane-spanning segment. Over 949-972 (EMMQKEGKTPIEAIIEAARMRLRP) the chain is Cytoplasmic. Residues 973–993 (ILMTSLAFILGVLPLVISHGA) traverse the membrane as a helical segment. The Periplasmic portion of the chain corresponds to 994–1006 (GSGAQNAVGTGVM). Residues 1007 to 1027 (GGMFAATVLAIYFVPVFFVVV) traverse the membrane as a helical segment. The Cytoplasmic portion of the chain corresponds to 1028–1037 (EHLFARFKKA).

It belongs to the resistance-nodulation-cell division (RND) (TC 2.A.6) family. As to quaternary structure, homotrimer. Part of the tripartite efflux system MdtEF-TolC, which is composed of an inner membrane transporter, MdtF, a membrane fusion protein, MdtE, and an outer membrane component, TolC. The complex forms a large protein conduit and can translocate molecules across both the inner and outer membranes.

It is found in the cell inner membrane. Its function is as follows. Part of the tripartite efflux system MdtEF-TolC, which confers resistance to various compounds. In Escherichia coli O157:H7, this protein is Multidrug resistance protein MdtF (mdtF).